The following is a 241-amino-acid chain: Uridylate kinase (241 aa).

9–10 (GS) lines the ATP pocket. Residue G44 coordinates UMP. ATP is bound by residues G45 and R49. Residues D66 and 114–120 (IMPGQTT) contribute to the UMP site. Residues T140, Y146, and D149 each contribute to the ATP site.

The protein belongs to the UMP kinase family. As to quaternary structure, homohexamer.

It localises to the cytoplasm. The catalysed reaction is UMP + ATP = UDP + ADP. It participates in pyrimidine metabolism; CTP biosynthesis via de novo pathway; UDP from UMP (UMPK route): step 1/1. Its activity is regulated as follows. Inhibited by UTP. In terms of biological role, catalyzes the reversible phosphorylation of UMP to UDP. In Haloquadratum walsbyi (strain DSM 16790 / HBSQ001), this protein is Uridylate kinase.